Reading from the N-terminus, the 206-residue chain is Probable GTP-binding protein EngB (206 aa).

In terms of domain architecture, EngB-type G spans 23–195 (DLLEIAFVGR…WARIEAIMAE (173 aa)). Residues 31 to 38 (GRSNVGKS), 58 to 62 (GRTQL), 76 to 79 (DLPG), 143 to 146 (TKCD), and 174 to 176 (FSA) contribute to the GTP site. Mg(2+)-binding residues include serine 38 and threonine 60.

This sequence belongs to the TRAFAC class TrmE-Era-EngA-EngB-Septin-like GTPase superfamily. EngB GTPase family. The cofactor is Mg(2+).

Its function is as follows. Necessary for normal cell division and for the maintenance of normal septation. The polypeptide is Probable GTP-binding protein EngB (Geobacter sulfurreducens (strain ATCC 51573 / DSM 12127 / PCA)).